The following is a 249-amino-acid chain: ATP synthase subunit a (249 aa).

The next 5 helical transmembrane spans lie at 35 to 55, 92 to 112, 131 to 151, 187 to 209, and 221 to 241; these read ILLTSWFVIALILLAAFISSL, VPFIGTLFLFIFVSNWSGALV, INTTVALALLTSIAYFYAGIS, LFGNILADELVVGVLVLLVPLFI, and SAIQALIFATLAANYIGEALE.

It belongs to the ATPase A chain family. F-type ATPases have 2 components, CF(1) - the catalytic core - and CF(0) - the membrane proton channel. CF(1) has five subunits: alpha(3), beta(3), gamma(1), delta(1), epsilon(1). CF(0) has four main subunits: a, b, b' and c.

The protein localises to the cellular thylakoid membrane. Its function is as follows. Key component of the proton channel; it plays a direct role in the translocation of protons across the membrane. The sequence is that of ATP synthase subunit a from Trichodesmium erythraeum (strain IMS101).